Here is a 625-residue protein sequence, read N- to C-terminus: 1-deoxy-D-xylulose-5-phosphate synthase (625 aa).

Thiamine diphosphate contacts are provided by residues H80 and 121–123 (GHS). D152 contributes to the Mg(2+) binding site. Residues 153-154 (GA), N181, Y290, and E371 contribute to the thiamine diphosphate site. N181 contacts Mg(2+).

This sequence belongs to the transketolase family. DXPS subfamily. As to quaternary structure, homodimer. Mg(2+) is required as a cofactor. Requires thiamine diphosphate as cofactor.

It carries out the reaction D-glyceraldehyde 3-phosphate + pyruvate + H(+) = 1-deoxy-D-xylulose 5-phosphate + CO2. The protein operates within metabolic intermediate biosynthesis; 1-deoxy-D-xylulose 5-phosphate biosynthesis; 1-deoxy-D-xylulose 5-phosphate from D-glyceraldehyde 3-phosphate and pyruvate: step 1/1. Functionally, catalyzes the acyloin condensation reaction between C atoms 2 and 3 of pyruvate and glyceraldehyde 3-phosphate to yield 1-deoxy-D-xylulose-5-phosphate (DXP). This Haemophilus influenzae (strain ATCC 51907 / DSM 11121 / KW20 / Rd) protein is 1-deoxy-D-xylulose-5-phosphate synthase.